The primary structure comprises 52 residues: Conotoxin-like peptide 2 (52 aa).

Positions 1 to 18 (MKFSTILLLVCPTVALSA) are cleaved as a signal peptide. 3 disulfide bridges follow: cysteine 24–cysteine 38, cysteine 31–cysteine 42, and cysteine 37–cysteine 49.

The protein localises to the secreted. This is Conotoxin-like peptide 2 (CTL-2) from Orgyia pseudotsugata (Douglas-fir tussock moth).